We begin with the raw amino-acid sequence, 243 residues long: Ubiquinone/menaquinone biosynthesis C-methyltransferase UbiE (243 aa).

S-adenosyl-L-methionine contacts are provided by residues threonine 69, aspartate 90, and 116 to 117 (DA).

It belongs to the class I-like SAM-binding methyltransferase superfamily. MenG/UbiE family.

The catalysed reaction is a 2-demethylmenaquinol + S-adenosyl-L-methionine = a menaquinol + S-adenosyl-L-homocysteine + H(+). It catalyses the reaction a 2-methoxy-6-(all-trans-polyprenyl)benzene-1,4-diol + S-adenosyl-L-methionine = a 5-methoxy-2-methyl-3-(all-trans-polyprenyl)benzene-1,4-diol + S-adenosyl-L-homocysteine + H(+). The protein operates within quinol/quinone metabolism; menaquinone biosynthesis; menaquinol from 1,4-dihydroxy-2-naphthoate: step 2/2. Its pathway is cofactor biosynthesis; ubiquinone biosynthesis. In terms of biological role, methyltransferase required for the conversion of demethylmenaquinol (DMKH2) to menaquinol (MKH2) and the conversion of 2-polyprenyl-6-methoxy-1,4-benzoquinol (DDMQH2) to 2-polyprenyl-3-methyl-6-methoxy-1,4-benzoquinol (DMQH2). The polypeptide is Ubiquinone/menaquinone biosynthesis C-methyltransferase UbiE (Burkholderia cenocepacia (strain HI2424)).